Consider the following 466-residue polypeptide: Muscarinic acetylcholine receptor M2 (466 aa).

Over 1–25 (MNNSTYINSSSENVIALESPYKTIE) the chain is Extracellular. N-linked (GlcNAc...) asparagine glycans are attached at residues asparagine 2, asparagine 3, and asparagine 8. A helical membrane pass occupies residues 26–48 (VVFIVLVAGSLSLVTIIGNILVM). The Cytoplasmic segment spans residues 49–62 (VSIKVNRHLQTVNN). The helical transmembrane segment at 63 to 83 (YFLFSLACADLIIGIFSMNLY) threads the bilayer. Over 84 to 100 (TLYTVIGYWPLGPVVCD) the chain is Extracellular. Cysteine 99 and cysteine 179 form a disulfide bridge. A helical membrane pass occupies residues 101–122 (LWLALDYVVSNASVMNLLIISF). The Important for signaling signature appears at 123–125 (DRY). At 123 to 142 (DRYFCVTKPLTYPVKRTTKM) the chain is on the cytoplasmic side. Residues 143-165 (AGMMIAAAWVLSFILWAPAILFW) form a helical membrane-spanning segment. Residues 166–187 (QFIVGGRTVPDKDCYIQFFSNP) are Extracellular-facing. Residues 188–212 (AVTFGTAIAAFYLPVIIMTVLYWQI) form a helical membrane-spanning segment. Topologically, residues 213-387 (SRASKSRIKK…PPSREKKVTR (175 aa)) are cytoplasmic. 2 disordered regions span residues 223 to 265 (GKKE…KVQN) and 279 to 315 (QGEE…SASQ). Polar residues-rich tracts occupy residues 228–238 (AQNQDPVSPSL) and 246–256 (PNNNNIPTSSD). A compositionally biased stretch (low complexity) spans 287–298 (NDSTSVSVVPSN). The chain crosses the membrane as a helical span at residues 388 to 410 (TILAILLAFIITWTPYNVMVLIN). At 411 to 418 (SFCASCIP) the chain is on the extracellular side. Cysteine 413 and cysteine 416 are joined by a disulfide. A helical transmembrane segment spans residues 419–442 (GTVWTIGYWLCYINSTINPACYAL). Residues 436 to 440 (NPACY) carry the Important for signaling motif. The Cytoplasmic segment spans residues 443–466 (CNATFKKTFKHLLMCHYKNIGATR). Threonine 446, threonine 450, and threonine 465 each carry phosphothreonine.

The protein belongs to the G-protein coupled receptor 1 family. Muscarinic acetylcholine receptor subfamily. CHRM2 sub-subfamily.

It localises to the cell membrane. It is found in the postsynaptic cell membrane. Its function is as follows. The muscarinic acetylcholine receptor mediates various cellular responses, including inhibition of adenylate cyclase, breakdown of phosphoinositides and modulation of potassium channels through the action of G proteins. Primary transducing effect is adenylate cyclase inhibition. Signaling promotes phospholipase C activity, leading to the release of inositol trisphosphate (IP3); this then triggers calcium ion release into the cytosol. The polypeptide is Muscarinic acetylcholine receptor M2 (CHRM2) (Gallus gallus (Chicken)).